Here is a 248-residue protein sequence, read N- to C-terminus: UPF0173 metal-dependent hydrolase Hlac_1347 (248 aa).

The protein belongs to the UPF0173 family.

This is UPF0173 metal-dependent hydrolase Hlac_1347 from Halorubrum lacusprofundi (strain ATCC 49239 / DSM 5036 / JCM 8891 / ACAM 34).